We begin with the raw amino-acid sequence, 231 residues long: Large ribosomal subunit protein uL3 (231 aa).

Gln151 carries the N5-methylglutamine modification.

It belongs to the universal ribosomal protein uL3 family. As to quaternary structure, part of the 50S ribosomal subunit. Forms a cluster with proteins L14 and L19. Methylated by PrmB.

In terms of biological role, one of the primary rRNA binding proteins, it binds directly near the 3'-end of the 23S rRNA, where it nucleates assembly of the 50S subunit. This chain is Large ribosomal subunit protein uL3, found in Ehrlichia canis (strain Jake).